Here is a 336-residue protein sequence, read N- to C-terminus: UDP-3-O-acylglucosamine N-acyltransferase (336 aa).

Residue His-233 is the Proton acceptor of the active site.

Belongs to the transferase hexapeptide repeat family. LpxD subfamily. Homotrimer.

The catalysed reaction is a UDP-3-O-[(3R)-3-hydroxyacyl]-alpha-D-glucosamine + a (3R)-hydroxyacyl-[ACP] = a UDP-2-N,3-O-bis[(3R)-3-hydroxyacyl]-alpha-D-glucosamine + holo-[ACP] + H(+). Its pathway is bacterial outer membrane biogenesis; LPS lipid A biosynthesis. Functionally, catalyzes the N-acylation of UDP-3-O-acylglucosamine using 3-hydroxyacyl-ACP as the acyl donor. Is involved in the biosynthesis of lipid A, a phosphorylated glycolipid that anchors the lipopolysaccharide to the outer membrane of the cell. In Helicobacter pylori (strain HPAG1), this protein is UDP-3-O-acylglucosamine N-acyltransferase.